Here is a 572-residue protein sequence, read N- to C-terminus: Proline--tRNA ligase (572 aa).

It belongs to the class-II aminoacyl-tRNA synthetase family. ProS type 1 subfamily. Homodimer.

Its subcellular location is the cytoplasm. The enzyme catalyses tRNA(Pro) + L-proline + ATP = L-prolyl-tRNA(Pro) + AMP + diphosphate. Functionally, catalyzes the attachment of proline to tRNA(Pro) in a two-step reaction: proline is first activated by ATP to form Pro-AMP and then transferred to the acceptor end of tRNA(Pro). As ProRS can inadvertently accommodate and process non-cognate amino acids such as alanine and cysteine, to avoid such errors it has two additional distinct editing activities against alanine. One activity is designated as 'pretransfer' editing and involves the tRNA(Pro)-independent hydrolysis of activated Ala-AMP. The other activity is designated 'posttransfer' editing and involves deacylation of mischarged Ala-tRNA(Pro). The misacylated Cys-tRNA(Pro) is not edited by ProRS. This chain is Proline--tRNA ligase, found in Salmonella dublin (strain CT_02021853).